A 340-amino-acid polypeptide reads, in one-letter code: Lipase chaperone (340 aa).

Residues 4 to 24 (ILLLIPLAFAASLAWFVWLEP) form a helical membrane-spanning segment. Residues 29 to 51 (ETAPPASPQAGADRAPPAASAGE) are disordered. The segment covering 36–51 (PQAGADRAPPAASAGE) has biased composition (low complexity).

The protein belongs to the lipase chaperone family.

It localises to the cell inner membrane. Its function is as follows. May be involved in the folding of the extracellular lipase during its passage through the periplasm. The sequence is that of Lipase chaperone (lifO) from Pseudomonas aeruginosa (strain ATCC 15692 / DSM 22644 / CIP 104116 / JCM 14847 / LMG 12228 / 1C / PRS 101 / PAO1).